The chain runs to 255 residues: Small ribosomal subunit protein eS1 (255 aa).

The span at 1-18 shows a compositional bias: basic residues; it reads MAVGKNKRLSKGKKGLKK. The disordered stretch occupies residues 1–28; that stretch reads MAVGKNKRLSKGKKGLKKRTQDPFSRKD. Ala-2 carries the post-translational modification N-acetylalanine; partial. A compositionally biased stretch (basic and acidic residues) spans 19-28; that stretch reads RTQDPFSRKD.

The protein belongs to the eukaryotic ribosomal protein eS1 family. As to quaternary structure, component of the small ribosomal subunit. Mature ribosomes consist of a small (40S) and a large (60S) subunit. The 40S subunit contains about 33 different proteins and 1 molecule of RNA (18S). The 60S subunit contains about 49 different proteins and 3 molecules of RNA (25S, 5.8S and 5S).

It is found in the cytoplasm. The chain is Small ribosomal subunit protein eS1 from Ajellomyces capsulatus (strain H143) (Darling's disease fungus).